Here is a 572-residue protein sequence, read N- to C-terminus: MKKRALLLSMSVLAMLYIPAGQAAEIDRLTVVKQYVDNVLNKASDTYHGDKPSPLLADGVDPRTGQQMEWIFPDGRRAVLSNFSAQQNLMRVMSGLSELSGDPQYQKRAEDIVRYHFQNYQDNSGLLYWGGHRFVDLKTLQPEGPSEKEKVHELKNAYPYYDLMFSVDSDATTRFIRGFWNAHVYDWRILETSRHGEYGKPMGALWESTFEQQPPFFATKGLSFLNAGNDLIYSASLLYKYQQDQGALVWAKRLADQYVLPRDAKTGLGVYQFTQALKREEPTDDADTHSKFGDRAQRQFGPEFGPTALEGNMMLKGRTSTLYSENALMQLQLGKDLGGQGDDLLKWTVDGLKAFAKYGYNEQDNTFRPMIANGQDLSNYTLPRDGYYGKKGSVLKPYKAGNEFLISYARAYAVDNDPLLWKVARGIASDQGLGDIGSAPGKEMKVKLDTTNSDPYALFALLDLYNASQVAEYRSLAEKVADNIIKTRYIDGFFMASPDRQYADVDAIEPYALLALEASLRNKPQAVAPFLNGAGFTEGAYLMADGSARISTRDNELFLLNVGETLQPNGRK.

The first 23 residues, 1–23 (MKKRALLLSMSVLAMLYIPAGQA), serve as a signal peptide directing secretion.

The protein belongs to the polysaccharide lyase 2 family.

Its subcellular location is the periplasm. It carries out the reaction Eliminative cleavage of (1-&gt;4)-alpha-D-galacturonan to give oligosaccharides with 4-deoxy-alpha-D-galact-4-enuronosyl groups at their non-reducing ends.. Its pathway is glycan metabolism; pectin degradation; 2-dehydro-3-deoxy-D-gluconate from pectin: step 2/5. In Yersinia pseudotuberculosis serotype I (strain IP32953), this protein is Periplasmic pectate lyase (pelY).